The chain runs to 207 residues: Zinc finger protein JAGGED-like (207 aa).

Residues 1 to 16 show a composition bias toward low complexity; sequence MRADENNTLDLNNLPD. A disordered region spans residues 1-20; that stretch reads MRADENNTLDLNNLPDDPSR. The C2H2-type zinc-finger motif lies at 50 to 72; it reads YECRFCSLKFFKSQALGGHMNRH.

Expressed in the emerging leaf, stamen and carpel primordia. Not expressed in the apical shoot meristem (SAM).

Its subcellular location is the nucleus. Acts with JAG to promote growth and patterning in stamens and carpels. Promotes the growth of the abaxial and adaxial sides of floral organs. Promotes the growth of the pollen-bearing microsporangia in anthers, the carpel walls of the gynoecium and the establishment of the correct number of cell layers in carpel walls. Promotes leaf blade growth and trichome development. The chain is Zinc finger protein JAGGED-like (JGL) from Arabidopsis thaliana (Mouse-ear cress).